The sequence spans 161 residues: Abscisic acid receptor PYL11 (161 aa).

Residues 3 to 154 are START-like; sequence TSQKYHTCGS…NLKSLAKLSE (152 aa). Abscisate-binding positions include K39, 68 to 73, 95 to 101, and E119; these read AEFSRE and RLVNYRS. Positions 64-68 match the Gate loop motif; it reads SGLPA. Residues 94–96 carry the Latch loop motif; that stretch reads HRL.

The protein belongs to the PYR/PYL/RCAR abscisic acid intracellular receptor family. As to quaternary structure, homodimer. Binds ABA on one subunit only. Interacts with PP2Cs. Binds to CARs protein in an ABA-independent manner, both at the plasma membrane and in the nucleus. Interacts with I-2 and TOPP1.

It is found in the cytoplasm. It localises to the nucleus. The protein localises to the cell membrane. In terms of biological role, receptor for abscisic acid (ABA) required for ABA-mediated responses such as stomatal closure and germination inhibition. Inhibits the activity of group-A protein phosphatases type 2C (PP2Cs) when activated by ABA. Suppresses the phosphatase activity of TOPP1 in a dose-dependent manner in vitro. The protein is Abscisic acid receptor PYL11 (PYL11) of Arabidopsis thaliana (Mouse-ear cress).